The chain runs to 105 residues: Small ribosomal subunit protein uS10 (105 aa).

It belongs to the universal ribosomal protein uS10 family. Part of the 30S ribosomal subunit.

Functionally, involved in the binding of tRNA to the ribosomes. This is Small ribosomal subunit protein uS10 from Legionella pneumophila (strain Paris).